Here is a 156-residue protein sequence, read N- to C-terminus: Small ribosomal subunit protein uS7 (156 aa).

Belongs to the universal ribosomal protein uS7 family. Part of the 30S ribosomal subunit. Contacts proteins S9 and S11.

Functionally, one of the primary rRNA binding proteins, it binds directly to 16S rRNA where it nucleates assembly of the head domain of the 30S subunit. Is located at the subunit interface close to the decoding center, probably blocks exit of the E-site tRNA. This is Small ribosomal subunit protein uS7 from Burkholderia multivorans (strain ATCC 17616 / 249).